Here is an 868-residue protein sequence, read N- to C-terminus: mRNA-capping enzyme (868 aa).

The active-site N6-GMP-lysine intermediate is K282. Positions 594–868 (GIYRAQTALI…LFGFICLRKN (275 aa)) constitute an mRNA cap 0 methyltransferase domain. S-adenosyl-L-methionine is bound by residues K607, G624, D646, and 710 to 712 (LFI).

In the N-terminal section; belongs to the dsDNA virus mRNA guanylyltransferase family. The protein in the C-terminal section; belongs to the class I-like SAM-binding methyltransferase superfamily. mRNA cap 0 methyltransferase family. Part of the viral DNA-directed RNA polymerase that consists of 8 polII-like subunits (RPB1, RPB2, RPB3, RPB5, RPB6, RPB7, RPB9, RPB10), a capping enzyme and a termination factor.

Its subcellular location is the virion. It carries out the reaction a 5'-end triphospho-ribonucleoside in mRNA + H2O = a 5'-end diphospho-ribonucleoside in mRNA + phosphate + H(+). It catalyses the reaction a 5'-end diphospho-ribonucleoside in mRNA + GTP + H(+) = a 5'-end (5'-triphosphoguanosine)-ribonucleoside in mRNA + diphosphate. The catalysed reaction is a 5'-end (5'-triphosphoguanosine)-ribonucleoside in mRNA + S-adenosyl-L-methionine = a 5'-end (N(7)-methyl 5'-triphosphoguanosine)-ribonucleoside in mRNA + S-adenosyl-L-homocysteine. It participates in mRNA processing; mRNA capping. In terms of biological role, probably catalyzes the second reaction in the mRNA cap formation pathway. Forms a covalent complex with GTP. The polypeptide is mRNA-capping enzyme (African swine fever virus (isolate Tick/South Africa/Pretoriuskop Pr4/1996) (ASFV)).